A 211-amino-acid chain; its full sequence is SAGA-associated factor 11 homolog (211 aa).

An SGF11-type zinc finger spans residues 115 to 136 (CTCPHCDRLVAAARFAPHLEKC). Residues 153–211 (TKEGASASSSSTSTYIQSGGNTGGTDDEDDVDWSSDKRKKKSTQNSRNNGSKKNNGKIF) are disordered. Residues 157–166 (ASASSSSTST) show a composition bias toward low complexity. Ser-187 is subject to Phosphoserine. The segment covering 197-211 (NSRNNGSKKNNGKIF) has biased composition (low complexity).

This sequence belongs to the SGF11 family. As to quaternary structure, component of some SAGA transcription coactivator-HAT complexes, at least composed of Ada2b, not/nonstop, Pcaf/Gcn5, Sgf11 and Spt3. Within the SAGA complex, Sgf11, e(y)2, and not/nonstop form an additional subcomplex of SAGA called the DUB module (deubiquitination module). Interacts directly with not/nonstop. Interacts with the AMEX complex component xmas-2. Interacts with Cbp80; important for promoter recruitment of Sgf11 that is not associated with the DUB module.

The protein resides in the nucleus. It is found in the nucleoplasm. It localises to the cytoplasm. In terms of biological role, component of the transcription regulatory histone acetylation (HAT) complex SAGA, a multiprotein complex that activates transcription by remodeling chromatin and mediating histone acetylation and deubiquitination. Within the SAGA complex, participates in a subcomplex that specifically deubiquitinates histone H2B. The SAGA complex is recruited to specific gene promoters by activators, where it is required for transcription. Required for nuclear receptor-mediated transactivation. Binds independently on SAGA to promoters in an RNA-dependent manner. Binds to mRNA and is essential for total mRNA export from the nucleus. Required to counteract heterochromatin silencing. Controls the development of neuronal connectivity in visual system by being required for accurate axon targeting in the optic lobe. Required for expression of ecdysone-induced genes such as br/broad. In Drosophila mojavensis (Fruit fly), this protein is SAGA-associated factor 11 homolog.